A 562-amino-acid chain; its full sequence is Phosphoglucomutase-1 (562 aa).

The residue at position 1 (M1) is an N-acetylmethionine. The residue at position 16 (K16) is an N6-acetyllysine. Position 23 (R23) interacts with alpha-D-glucose 1,6-bisphosphate. Phosphothreonine is present on T115. S117 is an alpha-D-glucose 1,6-bisphosphate binding site. The active-site Phosphoserine intermediate is S117. S117 provides a ligand contact to Mg(2+). Residues S117 and S134 each carry the phosphoserine modification. Phosphothreonine is present on T185. S213 bears the Phosphoserine mark. Mg(2+)-binding residues include D288, D290, and D292. Residues D292 and R293 each contribute to the alpha-D-glucose 1,6-bisphosphate site. At K349 the chain carries N6-acetyllysine. Y353 is modified (phosphotyrosine). T357 serves as a coordination point for alpha-D-glucose 1,6-bisphosphate. S369 carries the phosphoserine modification. Alpha-D-glucose 1,6-bisphosphate contacts are provided by E376, S378, and K389. The residue at position 378 (S378) is a Phosphoserine. K419 carries the post-translational modification N6-succinyllysine. Phosphothreonine; by PAK1 is present on T467. 3 positions are modified to phosphoserine: S477, S485, and S505. T507 carries the post-translational modification Phosphothreonine. Phosphoserine occurs at positions 509 and 541.

The protein belongs to the phosphohexose mutase family. Monomer. Mg(2+) serves as cofactor. Phosphorylation at Thr-467 by PAK1 significantly enhances enzymatic activity.

It is found in the cytoplasm. The enzyme catalyses alpha-D-glucose 1-phosphate = alpha-D-glucose 6-phosphate. The catalysed reaction is O-phospho-L-seryl-[protein] + alpha-D-glucose 1-phosphate = alpha-D-glucose 1,6-bisphosphate + L-seryl-[protein]. It carries out the reaction alpha-D-glucose 1,6-bisphosphate + L-seryl-[protein] = O-phospho-L-seryl-[protein] + alpha-D-glucose 6-phosphate. Its function is as follows. Catalyzes the reversible isomerization of alpha-D-glucose 1-phosphate to alpha-D-glucose 6-phosphate. The mechanism proceeds via the intermediate compound alpha-D-glucose 1,6-bisphosphate. This enzyme participates in both the breakdown and synthesis of glucose. In Bos taurus (Bovine), this protein is Phosphoglucomutase-1 (PGM1).